The primary structure comprises 102 residues: Ferredoxin-thioredoxin reductase, catalytic chain (102 aa).

Cysteine 53 lines the [4Fe-4S] cluster pocket. The active-site Nucleophile is cysteine 55. Cysteine 55 and cysteine 85 are oxidised to a cystine. The [4Fe-4S] cluster site is built by cysteine 72, cysteine 74, and cysteine 83.

The protein belongs to the ferredoxin thioredoxin reductase beta subunit family. Heterodimer of subunit A (variable subunit) and subunit B (catalytic subunit). Heterodimeric FTR forms a complex with ferredoxin and thioredoxin. The cofactor is [4Fe-4S] cluster.

The protein localises to the plastid. It localises to the chloroplast. The catalysed reaction is [thioredoxin]-disulfide + 2 reduced [2Fe-2S]-[ferredoxin] + 2 H(+) = [thioredoxin]-dithiol + 2 oxidized [2Fe-2S]-[ferredoxin]. Functionally, catalytic subunit of the ferredoxin-thioredoxin reductase (FTR), which catalyzes the two-electron reduction of thioredoxins by the electrons provided by reduced ferredoxin. This is Ferredoxin-thioredoxin reductase, catalytic chain (ftrB) from Guillardia theta (Cryptophyte).